We begin with the raw amino-acid sequence, 210 residues long: Type III pantothenate kinase (210 aa).

5 to 12 (DIGNTYLH) is a binding site for ATP. Residues Y69 and 73–76 (GVDR) each bind substrate. The active-site Proton acceptor is D75. D90 serves as a coordination point for K(+). S93 is a binding site for ATP. Residue T145 participates in substrate binding.

The protein belongs to the type III pantothenate kinase family. Homodimer. NH4(+) serves as cofactor. It depends on K(+) as a cofactor.

The protein resides in the cytoplasm. It catalyses the reaction (R)-pantothenate + ATP = (R)-4'-phosphopantothenate + ADP + H(+). The protein operates within cofactor biosynthesis; coenzyme A biosynthesis; CoA from (R)-pantothenate: step 1/5. Functionally, catalyzes the phosphorylation of pantothenate (Pan), the first step in CoA biosynthesis. This chain is Type III pantothenate kinase, found in Wolinella succinogenes (strain ATCC 29543 / DSM 1740 / CCUG 13145 / JCM 31913 / LMG 7466 / NCTC 11488 / FDC 602W) (Vibrio succinogenes).